The chain runs to 298 residues: Phosphatidylglycerol--prolipoprotein diacylglyceryl transferase (298 aa).

3 consecutive transmembrane segments (helical) span residues 17 to 37 (LAVRWYGLMYLVGFIAAIVVG), 59 to 79 (MMFYGVLGTVLGGRLGYVLFY), and 97 to 117 (GGMSFHGGFLGVTLAMMLFAW). Arg-142 is an a 1,2-diacyl-sn-glycero-3-phospho-(1'-sn-glycerol) binding site. The next 2 membrane-spanning stretches (helical) occupy residues 230 to 250 (MGAISALFLIGYGLARFTVEF) and 257 to 277 (FLGLLALGLSMGQWLSLPMIV).

This sequence belongs to the Lgt family.

Its subcellular location is the cell inner membrane. It carries out the reaction L-cysteinyl-[prolipoprotein] + a 1,2-diacyl-sn-glycero-3-phospho-(1'-sn-glycerol) = an S-1,2-diacyl-sn-glyceryl-L-cysteinyl-[prolipoprotein] + sn-glycerol 1-phosphate + H(+). Its pathway is protein modification; lipoprotein biosynthesis (diacylglyceryl transfer). Catalyzes the transfer of the diacylglyceryl group from phosphatidylglycerol to the sulfhydryl group of the N-terminal cysteine of a prolipoprotein, the first step in the formation of mature lipoproteins. This Burkholderia cenocepacia (strain ATCC BAA-245 / DSM 16553 / LMG 16656 / NCTC 13227 / J2315 / CF5610) (Burkholderia cepacia (strain J2315)) protein is Phosphatidylglycerol--prolipoprotein diacylglyceryl transferase.